The sequence spans 201 residues: Molybdenum cofactor guanylyltransferase (201 aa).

GTP-binding positions include 14 to 16 (LAG), Lys-31, and Asp-104. Asp-104 provides a ligand contact to Mg(2+).

Belongs to the MobA family. In terms of assembly, monomer. It depends on Mg(2+) as a cofactor.

The protein localises to the cytoplasm. The catalysed reaction is Mo-molybdopterin + GTP + H(+) = Mo-molybdopterin guanine dinucleotide + diphosphate. Transfers a GMP moiety from GTP to Mo-molybdopterin (Mo-MPT) cofactor (Moco or molybdenum cofactor) to form Mo-molybdopterin guanine dinucleotide (Mo-MGD) cofactor. This chain is Molybdenum cofactor guanylyltransferase, found in Helicobacter pylori (strain P12).